The sequence spans 567 residues: Hexose transporter HXT16 (567 aa).

Over residues 1-19 the composition is skewed to polar residues; it reads MASEQSSPEINADNLNSSA. A disordered region spans residues 1–32; it reads MASEQSSPEINADNLNSSAADVHVQPPGEKEW. Topologically, residues 1–55 are cytoplasmic; sequence MASEQSSPEINADNLNSSAADVHVQPPGEKEWSDGFYDKEVINGNTPDAPKRGFL. A helical transmembrane segment spans residues 56–76; the sequence is GYLIIYLLCYPVSFGGFLPGW. Residues 77–112 are Extracellular-facing; it reads DSGITAGFINMDNFKMNFGSYKHSTGEYYLSNVRMG. Residues 113 to 133 traverse the membrane as a helical segment; sequence LLVAMFSVGCSIGGVAFARLA. The Cytoplasmic segment spans residues 134-139; sequence DTLGRR. Residues 140-160 traverse the membrane as a helical segment; sequence LAIVIVVLVYMVGAIIQISSN. At 161-170 the chain is on the extracellular side; it reads HKWYQYFVGK. The helical transmembrane segment at 171 to 191 threads the bilayer; that stretch reads IIYGLGAGGCSVLCPMLLSEI. Residues 192 to 197 are Cytoplasmic-facing; it reads APTDLR. The helical transmembrane segment at 198 to 218 threads the bilayer; the sequence is GGLVSLYQLNMTFGIFLGYCS. Residues 219–232 lie on the Extracellular side of the membrane; the sequence is VYGTRKYSNTAQWR. A helical transmembrane segment spans residues 233–253; that stretch reads IPVGLCFLWALIIIVGMLLVP. The Cytoplasmic segment spans residues 254–336; sequence ESPRYLIECE…VQTFLQLTGE (83 aa). The chain crosses the membrane as a helical span at residues 337–353; that stretch reads NYFFFYGTTIFKSVGLT. Over 354 to 359 the chain is Extracellular; that stretch reads DGFETS. The chain crosses the membrane as a helical span at residues 360–377; sequence IVLGTVNFFSTIIAVMVV. Residues 378–384 lie on the Cytoplasmic side of the membrane; the sequence is DKIGRRK. A helical membrane pass occupies residues 385 to 405; that stretch reads CLLFGAASMMACMVIFASIGV. At 406 to 427 the chain is on the extracellular side; it reads KCLYPHGQDGPSSKGAGNAMIV. Residues 428–448 form a helical membrane-spanning segment; that stretch reads FTCFYIFCFATTWAPVAYIVV. Topologically, residues 449-465 are cytoplasmic; the sequence is AESFPSKVKSKAMSIST. Residues 466–486 form a helical membrane-spanning segment; it reads AFNWLWQFLIGFFTPFITGSI. A topological domain (extracellular) is located at residue His-487. Residues 488 to 508 traverse the membrane as a helical segment; that stretch reads FYYGYVFVGCLVAMFLYVFFF. At 509–567 the chain is on the cytoplasmic side; sequence LPETIGLSLEETQLLYEEGIKPWKSASWVPPSRRGASSRETEAKKKSWKEVLKFPKSFN. The segment at 533–555 is disordered; it reads SASWVPPSRRGASSRETEAKKKS. Basic and acidic residues predominate over residues 545 to 555; sequence SSRETEAKKKS.

The protein belongs to the major facilitator superfamily. Sugar transporter (TC 2.A.1.1) family.

The protein resides in the membrane. Probable glucose transporter. In Saccharomyces cerevisiae (strain ATCC 204508 / S288c) (Baker's yeast), this protein is Hexose transporter HXT16 (HXT16).